A 60-amino-acid polypeptide reads, in one-letter code: Transcriptional regulatory protein SenN (60 aa).

Positions 11 to 31 (RFRKRKTFGNQILPLELLIEK) form a DNA-binding region, H-T-H motif.

The protein to B.subtilis SenS.

Functionally, regulates the expression of extracellular-protein genes of Bacillus natto. In Bacillus subtilis subsp. natto, this protein is Transcriptional regulatory protein SenN (senN).